The chain runs to 1283 residues: Oxysterol-binding protein homolog 2 (1283 aa).

Ser-2 bears the N-acetylserine mark. Ser-7 bears the Phosphoserine mark. ANK repeat units follow at residues 106-134 (NGNTPLHLAAAQSRSDVISFLLSQKSIND) and 206-235 (TGTTLLYEYSQKKDIEMCQWLLKHGAEATV). Residues 289 to 386 (PPTYKGFLKK…WVNAIQSAIR (98 aa)) form the PH domain. 7 positions are modified to phosphoserine: Ser-422, Ser-445, Ser-451, Ser-455, Ser-458, Ser-459, and Ser-486. Residue Thr-488 is modified to Phosphothreonine. Polar residues-rich tracts occupy residues 504 to 518 (SNTLKSNRSMQSGSG) and 530 to 551 (ANLSQSNTTTGSTASLSDNNYI). Disordered regions lie at residues 504 to 571 (SNTL…LGIN) and 702 to 721 (TAGNKESLENDKEQESDTTA). Phosphoserine occurs at positions 512 and 515. Positions 554–568 (FEGDEANSDDEEEDL) are enriched in acidic residues. Positions 707 to 716 (ESLENDKEQE) are enriched in basic and acidic residues. Ser-717 is modified (phosphoserine). The FFAT signature appears at 745-751 (EFYDAAE). The interval 767–834 (STAAAPKHAP…SLKNFKAEDK (68 aa)) is disordered. Thr-783 carries the phosphothreonine modification. Ser-787 carries the phosphoserine modification. Basic and acidic residues-rich tracts occupy residues 791–810 (QDEKSKIESNVEKTSQKFEK) and 818–834 (DEPKTDQSLKNFKAEDK). Residues Ser-825 and Ser-1151 each carry the phosphoserine modification. Residues 897–1268 (SLWAVLKSMV…KYWRYTGKYW (372 aa)) form an OSBP-related domain (ORD) region.

This sequence belongs to the OSBP family. As to quaternary structure, interacts with SCS2.

The protein localises to the cell membrane. The protein resides in the endoplasmic reticulum membrane. Lipid transport protein (LTP) involved in non-vesicular transfer of lipids between membranes. Functions in phosphoinositide-coupled directional transport of various lipids by carrying the lipid molecule in a hydrophobic pocket and transferring it between membranes through the cytosol. Involved in maintenance of intracellular sterol distribution and homeostasis. Binds and transports sterol. Plays a role in the positive regulation of vesicular transport of ceramide from the ER to the Golgi, negatively regulating COPII-mediated ER export of cargos. This Saccharomyces cerevisiae (strain ATCC 204508 / S288c) (Baker's yeast) protein is Oxysterol-binding protein homolog 2.